The sequence spans 146 residues: Gonadotropin subunit beta-2 (146 aa).

A signal peptide spans 1-22 (MTVEISKVFVLMMLNLFLGASS). Disulfide bonds link C37–C85, C51–C100, C54–C138, C62–C116, C66–C118, and C121–C128. Residue N41 is glycosylated (N-linked (GlcNAc...) asparagine).

It belongs to the glycoprotein hormones subunit beta family. In terms of assembly, heterodimer of an alpha and a beta chain.

The protein localises to the secreted. In terms of biological role, involved in gametogenesis and steroidogenesis. This Trichopodus trichopterus (Three spot gourami) protein is Gonadotropin subunit beta-2 (cgbb).